The sequence spans 121 residues: uncharacterized protein (121 aa).

Disordered regions lie at residues 1–28 (MGCA…QNGD) and 60–82 (QENL…VPGL). A phosphoserine mark is found at Ser-95 and Ser-115.

Expressed in spleen, prostate, testis and uterus.

This is an uncharacterized protein from Homo sapiens (Human).